A 308-amino-acid polypeptide reads, in one-letter code: Maspardin (308 aa).

Positions 87–159 constitute an AB hydrolase-1 domain; sequence FCDGFRKLLD…NSFWLMPAFM (73 aa). At Ser304 the chain carries Phosphoserine.

The protein belongs to the AB hydrolase superfamily. In terms of assembly, interacts with CD4. Interacts with ALDH16A1. In terms of tissue distribution, expressed in all tissues tested, including heart, brain, placenta, lung, liver, skeletal muscle, kidney and pancreas. Expressed in J.CaM1.6, HuT 78 and HeLa cell lines (at protein level).

It localises to the cytoplasm. It is found in the cytosol. The protein localises to the membrane. Its subcellular location is the endosome membrane. The protein resides in the golgi apparatus. It localises to the trans-Golgi network membrane. Its function is as follows. May play a role as a negative regulatory factor in CD4-dependent T-cell activation. The polypeptide is Maspardin (SPG21) (Homo sapiens (Human)).